Reading from the N-terminus, the 121-residue chain is Fluoride-specific ion channel FluC 2 (121 aa).

A run of 4 helical transmembrane segments spans residues 3–23 (YLFI…LSFI), 31–51 (IGTF…GTLA), 64–84 (GITT…FELV), and 92–112 (FILL…LCFL). Residues Gly-71 and Thr-74 each coordinate Na(+).

It belongs to the fluoride channel Fluc/FEX (TC 1.A.43) family.

The protein localises to the cell membrane. The catalysed reaction is fluoride(in) = fluoride(out). Na(+) is not transported, but it plays an essential structural role and its presence is essential for fluoride channel function. Fluoride-specific ion channel. Important for reducing fluoride concentration in the cell, thus reducing its toxicity. This Staphylococcus saprophyticus subsp. saprophyticus (strain ATCC 15305 / DSM 20229 / NCIMB 8711 / NCTC 7292 / S-41) protein is Fluoride-specific ion channel FluC 2.